The primary structure comprises 219 residues: Thiamine-phosphate synthase (219 aa).

4-amino-2-methyl-5-(diphosphooxymethyl)pyrimidine-binding positions include 44 to 48 (QFREK) and N79. Mg(2+) contacts are provided by D80 and D99. Residue S117 coordinates 4-amino-2-methyl-5-(diphosphooxymethyl)pyrimidine. Residue 143 to 145 (TST) coordinates 2-[(2R,5Z)-2-carboxy-4-methylthiazol-5(2H)-ylidene]ethyl phosphate. K146 is a binding site for 4-amino-2-methyl-5-(diphosphooxymethyl)pyrimidine. Residues G175 and 195 to 196 (IS) each bind 2-[(2R,5Z)-2-carboxy-4-methylthiazol-5(2H)-ylidene]ethyl phosphate.

The protein belongs to the thiamine-phosphate synthase family. Mg(2+) is required as a cofactor.

The catalysed reaction is 2-[(2R,5Z)-2-carboxy-4-methylthiazol-5(2H)-ylidene]ethyl phosphate + 4-amino-2-methyl-5-(diphosphooxymethyl)pyrimidine + 2 H(+) = thiamine phosphate + CO2 + diphosphate. The enzyme catalyses 2-(2-carboxy-4-methylthiazol-5-yl)ethyl phosphate + 4-amino-2-methyl-5-(diphosphooxymethyl)pyrimidine + 2 H(+) = thiamine phosphate + CO2 + diphosphate. It carries out the reaction 4-methyl-5-(2-phosphooxyethyl)-thiazole + 4-amino-2-methyl-5-(diphosphooxymethyl)pyrimidine + H(+) = thiamine phosphate + diphosphate. Its pathway is cofactor biosynthesis; thiamine diphosphate biosynthesis; thiamine phosphate from 4-amino-2-methyl-5-diphosphomethylpyrimidine and 4-methyl-5-(2-phosphoethyl)-thiazole: step 1/1. Its function is as follows. Condenses 4-methyl-5-(beta-hydroxyethyl)thiazole monophosphate (THZ-P) and 2-methyl-4-amino-5-hydroxymethyl pyrimidine pyrophosphate (HMP-PP) to form thiamine monophosphate (TMP). In Bacillus cereus (strain B4264), this protein is Thiamine-phosphate synthase.